We begin with the raw amino-acid sequence, 355 residues long: tRNA pseudouridine synthase D (355 aa).

The active-site Nucleophile is the Asp-84. The 147-residue stretch at 160–306 (GVPNYFGLQR…MAHERRILRL (147 aa)) folds into the TRUD domain.

Belongs to the pseudouridine synthase TruD family.

It catalyses the reaction uridine(13) in tRNA = pseudouridine(13) in tRNA. Its function is as follows. Responsible for synthesis of pseudouridine from uracil-13 in transfer RNAs. The chain is tRNA pseudouridine synthase D from Pseudomonas aeruginosa (strain ATCC 15692 / DSM 22644 / CIP 104116 / JCM 14847 / LMG 12228 / 1C / PRS 101 / PAO1).